A 325-amino-acid chain; its full sequence is 4-hydroxy-3-methylbut-2-enyl diphosphate reductase (325 aa).

[4Fe-4S] cluster is bound at residue Cys-25. 2 residues coordinate (2E)-4-hydroxy-3-methylbut-2-enyl diphosphate: His-54 and His-87. Residues His-54 and His-87 each contribute to the dimethylallyl diphosphate site. Isopentenyl diphosphate-binding residues include His-54 and His-87. Cys-109 serves as a coordination point for [4Fe-4S] cluster. His-137 provides a ligand contact to (2E)-4-hydroxy-3-methylbut-2-enyl diphosphate. Dimethylallyl diphosphate is bound at residue His-137. Residue His-137 participates in isopentenyl diphosphate binding. Glu-139 serves as the catalytic Proton donor. Thr-179 serves as a coordination point for (2E)-4-hydroxy-3-methylbut-2-enyl diphosphate. Cys-209 contributes to the [4Fe-4S] cluster binding site. (2E)-4-hydroxy-3-methylbut-2-enyl diphosphate-binding residues include Ser-237, Ser-238, Asn-239, and Ser-282. The dimethylallyl diphosphate site is built by Ser-237, Ser-238, Asn-239, and Ser-282. Residues Ser-237, Ser-238, Asn-239, and Ser-282 each coordinate isopentenyl diphosphate.

This sequence belongs to the IspH family. [4Fe-4S] cluster serves as cofactor.

It catalyses the reaction isopentenyl diphosphate + 2 oxidized [2Fe-2S]-[ferredoxin] + H2O = (2E)-4-hydroxy-3-methylbut-2-enyl diphosphate + 2 reduced [2Fe-2S]-[ferredoxin] + 2 H(+). It carries out the reaction dimethylallyl diphosphate + 2 oxidized [2Fe-2S]-[ferredoxin] + H2O = (2E)-4-hydroxy-3-methylbut-2-enyl diphosphate + 2 reduced [2Fe-2S]-[ferredoxin] + 2 H(+). It functions in the pathway isoprenoid biosynthesis; dimethylallyl diphosphate biosynthesis; dimethylallyl diphosphate from (2E)-4-hydroxy-3-methylbutenyl diphosphate: step 1/1. The protein operates within isoprenoid biosynthesis; isopentenyl diphosphate biosynthesis via DXP pathway; isopentenyl diphosphate from 1-deoxy-D-xylulose 5-phosphate: step 6/6. Functionally, catalyzes the conversion of 1-hydroxy-2-methyl-2-(E)-butenyl 4-diphosphate (HMBPP) into a mixture of isopentenyl diphosphate (IPP) and dimethylallyl diphosphate (DMAPP). Acts in the terminal step of the DOXP/MEP pathway for isoprenoid precursor biosynthesis. This chain is 4-hydroxy-3-methylbut-2-enyl diphosphate reductase, found in Corynebacterium glutamicum (strain ATCC 13032 / DSM 20300 / JCM 1318 / BCRC 11384 / CCUG 27702 / LMG 3730 / NBRC 12168 / NCIMB 10025 / NRRL B-2784 / 534).